Reading from the N-terminus, the 91-residue chain is RNA-binding protein Hfq (91 aa).

A Sm domain is found at aspartate 9–valine 69.

The protein belongs to the Hfq family. Homohexamer.

Functionally, RNA chaperone that binds small regulatory RNA (sRNAs) and mRNAs to facilitate mRNA translational regulation in response to envelope stress, environmental stress and changes in metabolite concentrations. Also binds with high specificity to tRNAs. The protein is RNA-binding protein Hfq of Pseudothermotoga lettingae (strain ATCC BAA-301 / DSM 14385 / NBRC 107922 / TMO) (Thermotoga lettingae).